Here is a 456-residue protein sequence, read N- to C-terminus: Chromosomal replication initiator protein DnaA (456 aa).

Positions 1–85 are domain I, interacts with DnaA modulators; sequence MDADLNKLWE…EIKFIIESDL (85 aa). The interval 85 to 117 is domain II; sequence LNNEDELNNSDNSDKNRDKNSRRNIVVNDEMSS. Positions 118 to 334 are domain III, AAA+ region; the sequence is TLNPKYTFNS…GALIRIIAYS (217 aa). Residues Gly-162, Gly-164, Lys-165, and Thr-166 each coordinate ATP. The domain IV, binds dsDNA stretch occupies residues 335 to 456; sequence SLTNREVTVD…SDITKKVSQN (122 aa).

Belongs to the DnaA family. In terms of assembly, oligomerizes as a right-handed, spiral filament on DNA at oriC.

The protein localises to the cytoplasm. Plays an essential role in the initiation and regulation of chromosomal replication. ATP-DnaA binds to the origin of replication (oriC) to initiate formation of the DNA replication initiation complex once per cell cycle. Binds the DnaA box (a 9 base pair repeat at the origin) and separates the double-stranded (ds)DNA. Forms a right-handed helical filament on oriC DNA; dsDNA binds to the exterior of the filament while single-stranded (ss)DNA is stabiized in the filament's interior. The ATP-DnaA-oriC complex binds and stabilizes one strand of the AT-rich DNA unwinding element (DUE), permitting loading of DNA polymerase. After initiation quickly degrades to an ADP-DnaA complex that is not apt for DNA replication. Binds acidic phospholipids. The polypeptide is Chromosomal replication initiator protein DnaA (Clostridium botulinum (strain Eklund 17B / Type B)).